We begin with the raw amino-acid sequence, 352 residues long: Photosystem II D2 protein (352 aa).

An N-acetylthreonine modification is found at threonine 2. Threonine 2 carries the post-translational modification Phosphothreonine. The helical transmembrane segment at 40–60 (CAYFALGGWLTGTTFVSSWYT) threads the bilayer. Position 117 (histidine 117) interacts with chlorophyll a. Residues 124–140 (GFMLRQFEIARAVQIRP) form a helical membrane-spanning segment. Pheophytin a-binding residues include glutamine 129 and asparagine 142. A helical membrane pass occupies residues 152 to 165 (VFVSVFLIYPLGQS). Histidine 197 contacts chlorophyll a. The helical transmembrane segment at 207–227 (AALLCAIHGATVENTLFEDGD) threads the bilayer. A plastoquinone-binding residues include histidine 214 and phenylalanine 261. Histidine 214 lines the Fe cation pocket. Residue histidine 268 coordinates Fe cation. Residues 278 to 294 (GLWMSALGVVGLALNLR) traverse the membrane as a helical segment.

This sequence belongs to the reaction center PufL/M/PsbA/D family. PSII is composed of 1 copy each of membrane proteins PsbA, PsbB, PsbC, PsbD, PsbE, PsbF, PsbH, PsbI, PsbJ, PsbK, PsbL, PsbM, PsbT, PsbX, PsbY, PsbZ, Psb30/Ycf12, at least 3 peripheral proteins of the oxygen-evolving complex and a large number of cofactors. It forms dimeric complexes. The D1/D2 heterodimer binds P680, chlorophylls that are the primary electron donor of PSII, and subsequent electron acceptors. It shares a non-heme iron and each subunit binds pheophytin, quinone, additional chlorophylls, carotenoids and lipids. There is also a Cl(-1) ion associated with D1 and D2, which is required for oxygen evolution. The PSII complex binds additional chlorophylls, carotenoids and specific lipids. serves as cofactor.

The protein localises to the plastid. The protein resides in the chloroplast thylakoid membrane. It catalyses the reaction 2 a plastoquinone + 4 hnu + 2 H2O = 2 a plastoquinol + O2. Functionally, photosystem II (PSII) is a light-driven water:plastoquinone oxidoreductase that uses light energy to abstract electrons from H(2)O, generating O(2) and a proton gradient subsequently used for ATP formation. It consists of a core antenna complex that captures photons, and an electron transfer chain that converts photonic excitation into a charge separation. The D1/D2 (PsbA/PsbD) reaction center heterodimer binds P680, the primary electron donor of PSII as well as several subsequent electron acceptors. D2 is needed for assembly of a stable PSII complex. The sequence is that of Photosystem II D2 protein from Ostreococcus tauri.